We begin with the raw amino-acid sequence, 233 residues long: Pirin-like protein YhaK (233 aa).

Belongs to the pirin family. As to quaternary structure, monomer.

It localises to the cytoplasm. Functionally, does not have quercetin 2,3-dioxygenase activity. This Escherichia coli (strain K12) protein is Pirin-like protein YhaK (yhaK).